Here is a 170-residue protein sequence, read N- to C-terminus: Transcription factor E (170 aa).

Positions 1 to 93 constitute an HTH TFE/IIEalpha-type domain; the sequence is MKEAYLYIVE…TWYVDDEIIR (93 aa).

Belongs to the TFE family. As to quaternary structure, monomer. Interaction with RNA polymerase subunits RpoF and RpoE is necessary for Tfe stimulatory transcription activity. Able to interact with Tbp and RNA polymerase in the absence of DNA promoter. Interacts both with the preinitiation and elongation complexes.

Transcription factor that plays a role in the activation of archaeal genes transcribed by RNA polymerase. Facilitates transcription initiation by enhancing TATA-box recognition by TATA-box-binding protein (Tbp), and transcription factor B (Tfb) and RNA polymerase recruitment. Not absolutely required for transcription in vitro, but particularly important in cases where Tbp or Tfb function is not optimal. It dynamically alters the nucleic acid-binding properties of RNA polymerases by stabilizing the initiation complex and destabilizing elongation complexes. Seems to translocate with the RNA polymerase following initiation and acts by binding to the non template strand of the transcription bubble in elongation complexes. This Pyrobaculum islandicum (strain DSM 4184 / JCM 9189 / GEO3) protein is Transcription factor E.